Here is an 810-residue protein sequence, read N- to C-terminus: MIPVTELRYFADTQPAYRILKPWWDVFTDYISIVMLMIAVFGGTLQVTQDKMICLPCKWVTKDSCNDSFRGWAASSPEPTYPNSTVLPTPDTGPTGIKYDLDRHQYNYVDAVCYENRLHWFAKYFPYLVLLHTLIFLACSNFWFKFPRTSSKLEHFVSILLKCFDSPWTTRALSETVVEESDPKPAFSKMNGSMDKKSSTVSEDVEATVPMLQRTKSRIEQGIVDRSETGVLDKKEGEQAKALFEKVKKFRTHVEEGDIVYRLYMRQTIIKVIKFALIICYTVYYVHNIKFDVDCTVDIESLTGYRTYRCAHPLATLFKILASFYISLVIFYGLICMYTLWWMLRRSLKKYSFESIREESSYSDIPDVKNDFAFMLHLIDQYDPLYSKRFAVFLSEVSENKLRQLNLNNEWTLDKLRQRLTKNAQDKLELHLFMLSGIPDTVFDLVELEVLKLELIPDVTIPPSIAQLTGLKELWLYHTAAKIEAPALAFLRENLRALHIKFTDIKEIPLWIYSLKTLEELHLTGNLSAENNRYIVIDGLRELKRLKVLRLKSNLSKLPQVVTDVGVHLQKLSINNEGTKLIVLNSLKKMVNLTELELIRCDLERIPHSIFSLHNLQEIDLKDNNLKTIEEIISFQHLHRLTCLKLWYNHIAYIPIQIGNLTNLERLYLNRNKIEKIPTQLFYCRKLRYLDLSHNNLTFLPADIGLLQNLQNLAVTANRIEALPPELFQCRKLRALHLGNNVLQSLPSRVGELTNLTQIELRGNRLECLPVELGECPLLKRSGLVVEEDLFSTLPPEVKERLWRADKEQA.

Methionine 1 carries the post-translational modification N-acetylmethionine. Topologically, residues 1–22 (MIPVTELRYFADTQPAYRILKP) are cytoplasmic. Residues 23–47 (WWDVFTDYISIVMLMIAVFGGTLQV) form a helical membrane-spanning segment. Topologically, residues 48-123 (TQDKMICLPC…YENRLHWFAK (76 aa)) are extracellular. 3 disulfide bridges follow: cysteine 54–cysteine 310, cysteine 57–cysteine 65, and cysteine 113–cysteine 295. Residues asparagine 66 and asparagine 83 are each glycosylated (N-linked (GlcNAc...) asparagine). A helical transmembrane segment spans residues 124-142 (YFPYLVLLHTLIFLACSNF). Topologically, residues 143 to 264 (WFKFPRTSSK…EEGDIVYRLY (122 aa)) are cytoplasmic. Phosphothreonine is present on threonine 200. Serine 202 is subject to Phosphoserine. Residue threonine 215 is modified to Phosphothreonine. Residue serine 217 is modified to Phosphoserine. Residues 265–286 (MRQTIIKVIKFALIICYTVYYV) form a helical membrane-spanning segment. Residues 287-316 (HNIKFDVDCTVDIESLTGYRTYRCAHPLAT) are Extracellular-facing. A helical transmembrane segment spans residues 317-341 (LFKILASFYISLVIFYGLICMYTLW). Residues 342–810 (WMLRRSLKKY…RLWRADKEQA (469 aa)) lie on the Cytoplasmic side of the membrane. 17 LRR repeats span residues 411 to 422 (WTLDKLRQRLTK), 423 to 445 (NAQD…VFDL), 447 to 468 (ELEV…IAQL), 469 to 492 (TGLK…AFLR), 493 to 515 (ENLR…IYSL), 518 to 542 (LEEL…GLRE), 543 to 565 (LKRL…VTDV), 567 to 589 (VHLQ…SLKK), 590 to 613 (MVNL…IFSL), 614 to 637 (HNLQ…SFQH), 639 to 661 (HRLT…IGNL), 662 to 684 (TNLE…LFYC), 686 to 707 (KLRY…IGLL), 708 to 730 (QNLQ…LFQC), 732 to 753 (KLRA…VGEL), 754 to 776 (TNLT…LGEC), and 778 to 801 (LLKR…VKER). The short motif at 706–707 (LL) is the Di-leucine motif element.

This sequence belongs to the LRRC8 family. As to quaternary structure, heterohexamer; oligomerizes with other LRRC8 proteins (LRRC8B, LRRC8C, LRRC8D and/or LRRC8E) to form a heterohexamer. Can form homohexamers in vitro, but these have lower conductance than heterohexamers. In vivo, the subunit composition may depend primarily on expression levels, and heterooligomeric channels containing various proportions of the different LRRC8 proteins may coexist. Interact with GRB2. Interacts with NOX4; this interaction prevents the ubiquitin-mediated degradation of LRRC8A. In terms of processing, N-glycosylated. Ubiquitously expressed. High levels detected in the bone marrow; lower levels found in peripheral blood cells. Highly expressed in pancreatic beta cells.

Its subcellular location is the cell membrane. The protein localises to the lysosome membrane. The catalysed reaction is chloride(in) = chloride(out). It carries out the reaction iodide(out) = iodide(in). It catalyses the reaction taurine(out) = taurine(in). The enzyme catalyses L-aspartate(out) = L-aspartate(in). The catalysed reaction is L-glutamate(out) = L-glutamate(in). It carries out the reaction myo-inositol(out) = myo-inositol(in). It catalyses the reaction 2',3'-cGAMP(out) = 2',3'-cGAMP(in). With respect to regulation, inhibited by (4-[(2-butyl-6,7-dichloro-2-cyclopentyl-2,3-dihydro-1-oxo-1H-inden-5-yl)oxy]butanoic acid), which plugs the channel like a cork in a bottle by binding in the extracellular selectivity filter and sterically occluding ion conduction. Lipids may block conduction in closed heterohexameric channels. Its function is as follows. Essential component of the volume-regulated anion channel (VRAC, also named VSOAC channel), an anion channel required to maintain a constant cell volume in response to extracellular or intracellular osmotic changes. The VRAC channel conducts iodide better than chloride and can also conduct organic osmolytes like taurine. Mediates efflux of amino acids, such as aspartate and glutamate, in response to osmotic stress. In complex with LRRC8C or LRRC8E, acts as a transporter of immunoreactive cyclic dinucleotide GMP-AMP (2'-3'-cGAMP), an immune messenger produced in response to DNA virus in the cytosol: mediates both import and export of 2'-3'-cGAMP, thereby promoting transfer of 2'-3'-cGAMP to bystander cells. In contrast, complexes containing LRRC8D inhibit transport of 2'-3'-cGAMP. Required for in vivo channel activity, together with at least one other family member (LRRC8B, LRRC8C, LRRC8D or LRRC8E); channel characteristics depend on the precise subunit composition. Can form functional channels by itself (in vitro). Involved in B-cell development: required for the pro-B cell to pre-B cell transition. Also required for T-cell development. Required for myoblast differentiation: VRAC activity promotes membrane hyperpolarization and regulates insulin-stimulated glucose metabolism and oxygen consumption. Also acts as a regulator of glucose-sensing in pancreatic beta cells: VRAC currents, generated in response to hypotonicity- or glucose-induced beta cell swelling, depolarize cells, thereby causing electrical excitation, leading to increase glucose sensitivity and insulin secretion. Also plays a role in lysosome homeostasis by forming functional lysosomal VRAC channels in response to low cytoplasmic ionic strength condition: lysosomal VRAC channels are necessary for the formation of large lysosome-derived vacuoles, which store and then expel excess water to maintain cytosolic water homeostasis. Acts as a key factor in NLRP3 inflammasome activation by modulating itaconate efflux and mitochondria function. The protein is Volume-regulated anion channel subunit LRRC8A of Mus musculus (Mouse).